A 56-amino-acid polypeptide reads, in one-letter code: uncharacterized protein (56 aa).

A run of 2 helical transmembrane segments spans residues 5–23 and 33–55; these read VLIFLIGYLPFFLAAYWIY and ITAGAILSFDAAMLAIFGGILGW.

Its subcellular location is the cell membrane. This is an uncharacterized protein from Archaeoglobus fulgidus (strain ATCC 49558 / DSM 4304 / JCM 9628 / NBRC 100126 / VC-16).